The primary structure comprises 71 residues: Cold shock-like protein CspB (71 aa).

The 61-residue stretch at 7-67 (GLVKWFNADK…GAKGPAAANV (61 aa)) folds into the CSD domain.

The protein resides in the cytoplasm. In Escherichia coli (strain K12), this protein is Cold shock-like protein CspB (cspB).